Reading from the N-terminus, the 96-residue chain is HssA/B-like protein 25 (96 aa).

This sequence belongs to the hssA/B family.

This Dictyostelium discoideum (Social amoeba) protein is HssA/B-like protein 25 (hssl25).